Reading from the N-terminus, the 535-residue chain is Tetrathionate hydrolase (535 aa).

Positions 1 to 39 (MNLKILVGLFILGIIILSAMTFLNFTTIVAQDKGDQQPK) are cleaved as a signal peptide. N-linked (GlcNAc...) asparagine glycosylation occurs at asparagine 50.

It belongs to the tetrathionate hydrolase family. Monomer and homodimer; in equilibrium.

It is found in the cell surface. The catalysed reaction is tetrathionate + H2O = sulfur + thiosulfate + sulfate + H(+). Functionally, catalyzes the hydrolysis of tetrathionate to generate elemental sulfur, thiosulfate and sulfate. The sequence is that of Tetrathionate hydrolase from Acidianus ambivalens (Desulfurolobus ambivalens).